The primary structure comprises 62 residues: Venom protein 51.1 (62 aa).

The N-terminal stretch at 1-25 (MKFFGILLIVTMVVLVMIATTYVES) is a signal peptide. 3 cysteine pairs are disulfide-bonded: Cys-32/Cys-53, Cys-39/Cys-58, and Cys-43/Cys-60.

Expressed by the venom gland.

Its subcellular location is the secreted. Functionally, neurotoxin. Decreases the action potential of myelinated nerves in mice and frogs. This chain is Venom protein 51.1, found in Lychas mucronatus (Chinese swimming scorpion).